We begin with the raw amino-acid sequence, 1345 residues long: Aldehyde oxidase 2 (1345 aa).

Positions 9–96 (DELEFFVNGK…GAAVTTVEGV (88 aa)) constitute a 2Fe-2S ferredoxin-type domain. Residues Cys-48, Cys-53, Cys-56, and Cys-78 each coordinate [2Fe-2S] cluster. A Mo-molybdopterin-binding site is contributed by Gln-117. Residues Cys-118, Cys-121, Cys-153, and Cys-155 each contribute to the [2Fe-2S] cluster site. Cys-155 contributes to the Mo-molybdopterin binding site. An FAD-binding PCMH-type domain is found at 238 to 423 (FYGERITWIA…GSVYIPHSQK (186 aa)). Residues 266-273 (LISGNTAL), Ala-347, Ser-356, His-360, Asp-369, and Leu-413 each bind FAD. Residues 812-813 (GF), 1094-1097 (ASVG), Gln-1209, and Leu-1274 contribute to the Mo-molybdopterin site. Glu-1276 acts as the Proton acceptor; for azaheterocycle hydroxylase activity in catalysis.

It belongs to the xanthine dehydrogenase family. In terms of assembly, homodimer. Requires [2Fe-2S] cluster as cofactor. FAD is required as a cofactor. The cofactor is Mo-molybdopterin.

The protein localises to the cytoplasm. The enzyme catalyses an aldehyde + O2 + H2O = a carboxylate + H2O2 + H(+). Its function is as follows. Oxidase with broad substrate specificity, oxidizing aromatic azaheterocycles, such as phthalazine, as well as aldehydes, such as benzaldehyde and retinal. The chain is Aldehyde oxidase 2 (Aox2) from Rattus norvegicus (Rat).